The following is a 646-amino-acid chain: Probable lysosomal cobalamin transporter (646 aa).

5 consecutive transmembrane segments (helical) span residues 11 to 31 (LIWV…VITT), 42 to 62 (IAVS…VFLL), 102 to 122 (TLYT…YFWF), 149 to 169 (LGFV…PAAG), and 193 to 213 (ALTF…ILYT). N-linked (GlcNAc...) asparagine glycosylation is present at Asn297. 2 consecutive transmembrane segments (helical) span residues 317 to 337 (LLGG…MLIT) and 380 to 400 (ILMA…LATI). Disordered regions lie at residues 459–588 (QPAA…PPRR) and 603–623 (VGRA…DKKE). 2 stretches are compositionally biased toward low complexity: residues 460 to 490 (PAAA…SPAA) and 517 to 543 (PSTS…RTPR). The N-linked (GlcNAc...) asparagine glycan is linked to Asn545. Residues 565–582 (APAAALARPGAISPAAPR) show a composition bias toward low complexity. The N-linked (GlcNAc...) asparagine glycan is linked to Asn626.

This sequence belongs to the LIMR family. LMBRD1 subfamily.

Its subcellular location is the lysosome membrane. Functionally, probable lysosomal cobalamin transporter. Required to export cobalamin from lysosomes allowing its conversion to cofactors. This chain is Probable lysosomal cobalamin transporter, found in Chaetomium globosum (strain ATCC 6205 / CBS 148.51 / DSM 1962 / NBRC 6347 / NRRL 1970) (Soil fungus).